A 113-amino-acid chain; its full sequence is MVAPVNGIASALQQMQAMAAQAAGGASPATSLAGSGAASAGSFASAMKASLDKISGDQQKALGEAHAFEIGAQNVSLNDVMVDMQKANIGFQFGLQVRNKLVSAYNEIMQMSV.

The protein belongs to the FliE family.

The protein localises to the bacterial flagellum basal body. The polypeptide is Flagellar hook-basal body complex protein FliE (Burkholderia mallei (strain NCTC 10247)).